We begin with the raw amino-acid sequence, 193 residues long: Cuticle protein 18.7 (193 aa).

Functionally, component of the cuticle of migratory locust which contains more than 100 different structural proteins. The chain is Cuticle protein 18.7 from Locusta migratoria (Migratory locust).